Here is a 330-residue protein sequence, read N- to C-terminus: MTSYRNFGIVGGGAWGTALAQLLAADGAPVRLWAREADVVAAINAEHRNPVFLPGAPLSSSLTATTDLAAMTDLDALLVVVPVPYLRAVLTELPPGDAPLVFCSKGMEAGSFAFPVDMARDLAPGRPHAVLSGPTFAHEVAAGLPTAITLAAADPALATELAQALARPHFRPYVSTDVIGAEIGGAVKNILAIACGIVEGAGLGLNARAALISRGFAEMTRFGLSRGAKAETLAGLAGLGDLVLTCTSANSRNFALGQGLGRGEAIETLMADRRTIAEGAFSAPVVAAAARADGVDMPITDTVARLVAGEMRVADAIQALLSRPLRPEGQ.

Residues W15, R35, and K105 each coordinate NADPH. Residues K105, G133, and T135 each contribute to the sn-glycerol 3-phosphate site. A137 contributes to the NADPH binding site. Residues K188, D241, S251, R252, and N253 each coordinate sn-glycerol 3-phosphate. Residue K188 is the Proton acceptor of the active site. R252 serves as a coordination point for NADPH. NADPH-binding residues include I276 and E278.

It belongs to the NAD-dependent glycerol-3-phosphate dehydrogenase family.

It localises to the cytoplasm. The enzyme catalyses sn-glycerol 3-phosphate + NAD(+) = dihydroxyacetone phosphate + NADH + H(+). It carries out the reaction sn-glycerol 3-phosphate + NADP(+) = dihydroxyacetone phosphate + NADPH + H(+). The protein operates within membrane lipid metabolism; glycerophospholipid metabolism. Catalyzes the reduction of the glycolytic intermediate dihydroxyacetone phosphate (DHAP) to sn-glycerol 3-phosphate (G3P), the key precursor for phospholipid synthesis. The polypeptide is Glycerol-3-phosphate dehydrogenase [NAD(P)+] 1 (Sphingopyxis alaskensis (strain DSM 13593 / LMG 18877 / RB2256) (Sphingomonas alaskensis)).